Consider the following 382-residue polypeptide: Mannitol-1-phosphate 5-dehydrogenase (382 aa).

Position 3–14 (3–14 (ALHFGAGNIGRG)) interacts with NAD(+).

The protein belongs to the mannitol dehydrogenase family.

The enzyme catalyses D-mannitol 1-phosphate + NAD(+) = beta-D-fructose 6-phosphate + NADH + H(+). This chain is Mannitol-1-phosphate 5-dehydrogenase, found in Cronobacter sakazakii (strain ATCC BAA-894) (Enterobacter sakazakii).